Consider the following 258-residue polypeptide: Imidazole glycerol phosphate synthase subunit HisF (258 aa).

Residues aspartate 11 and aspartate 130 contribute to the active site.

This sequence belongs to the HisA/HisF family. As to quaternary structure, heterodimer of HisH and HisF.

It is found in the cytoplasm. The enzyme catalyses 5-[(5-phospho-1-deoxy-D-ribulos-1-ylimino)methylamino]-1-(5-phospho-beta-D-ribosyl)imidazole-4-carboxamide + L-glutamine = D-erythro-1-(imidazol-4-yl)glycerol 3-phosphate + 5-amino-1-(5-phospho-beta-D-ribosyl)imidazole-4-carboxamide + L-glutamate + H(+). It functions in the pathway amino-acid biosynthesis; L-histidine biosynthesis; L-histidine from 5-phospho-alpha-D-ribose 1-diphosphate: step 5/9. In terms of biological role, IGPS catalyzes the conversion of PRFAR and glutamine to IGP, AICAR and glutamate. The HisF subunit catalyzes the cyclization activity that produces IGP and AICAR from PRFAR using the ammonia provided by the HisH subunit. The protein is Imidazole glycerol phosphate synthase subunit HisF of Gluconacetobacter diazotrophicus (strain ATCC 49037 / DSM 5601 / CCUG 37298 / CIP 103539 / LMG 7603 / PAl5).